The primary structure comprises 85 residues: Sugar transporter SemiSWEET (85 aa).

The region spanning 2–59 (ENLIGYVAAFLTTVSFLPQVLRVVMTKQTRDISRNMYIMFFLGVVLWFVYGILRSDLP) is the PQ-loop domain. Transmembrane regions (helical) follow at residues 5–25 (IGYVAAFLTTVSFLPQVLRVV), 33–53 (ISRNMYIMFFLGVVLWFVYGI), and 57–77 (DLPIILANVVTLFFVTIILYY).

As to quaternary structure, homodimer.

The protein localises to the cell membrane. In terms of biological role, the homodimer mediates transmembrane sugar transport down a concentration gradient. Transport is probably effected by rocking-type movements, where a cargo-binding cavity opens first on one and then on the other side of the membrane. The sequence is that of Sugar transporter SemiSWEET from Leptospira biflexa serovar Patoc (strain Patoc 1 / ATCC 23582 / Paris).